Here is a 184-residue protein sequence, read N- to C-terminus: Transcription termination/antitermination protein NusG (184 aa).

This sequence belongs to the NusG family.

Functionally, participates in transcription elongation, termination and antitermination. The sequence is that of Transcription termination/antitermination protein NusG from Borreliella burgdorferi (strain ATCC 35210 / DSM 4680 / CIP 102532 / B31) (Borrelia burgdorferi).